Reading from the N-terminus, the 257-residue chain is Receptor expression-enhancing protein 4 (257 aa).

A run of 2 helical transmembrane segments spans residues 1–21 (MVSW…CPAY) and 42–62 (WIVF…ISWF). A phosphoserine mark is found at Ser-152 and Ser-194. The interval 178–257 (PHQRPPIGYR…KKTVPSDMDS (80 aa)) is disordered. Phosphothreonine is present on Thr-196. Ser-202 is subject to Phosphoserine. Thr-250 is subject to Phosphothreonine. Residue Ser-253 is modified to Phosphoserine.

The protein belongs to the DP1 family.

It is found in the endoplasmic reticulum membrane. In terms of biological role, microtubule-binding protein required to ensure proper cell division and nuclear envelope reassembly by sequestering the endoplasmic reticulum away from chromosomes during mitosis. Probably acts by clearing the endoplasmic reticulum membrane from metaphase chromosomes. The sequence is that of Receptor expression-enhancing protein 4 (REEP4) from Pongo abelii (Sumatran orangutan).